Consider the following 894-residue polypeptide: Valine--tRNA ligase (894 aa).

Over residues 1 to 22 (MKSIQTPSKSHTNTKETPVMSQ) the composition is skewed to polar residues. A disordered region spans residues 1–28 (MKSIQTPSKSHTNTKETPVMSQEETKGY). The short motif at 69-79 (PNVTGSLHIGH) is the 'HIGH' region element. The short motif at 554 to 558 (KMSKS) is the 'KMSKS' region element. An ATP-binding site is contributed by lysine 557. Positions 832–894 (IISRLEKQQE…VKVELQGIKG (63 aa)) form a coiled coil.

This sequence belongs to the class-I aminoacyl-tRNA synthetase family. ValS type 1 subfamily. As to quaternary structure, monomer.

Its subcellular location is the cytoplasm. It catalyses the reaction tRNA(Val) + L-valine + ATP = L-valyl-tRNA(Val) + AMP + diphosphate. Its function is as follows. Catalyzes the attachment of valine to tRNA(Val). As ValRS can inadvertently accommodate and process structurally similar amino acids such as threonine, to avoid such errors, it has a 'posttransfer' editing activity that hydrolyzes mischarged Thr-tRNA(Val) in a tRNA-dependent manner. In Wolinella succinogenes (strain ATCC 29543 / DSM 1740 / CCUG 13145 / JCM 31913 / LMG 7466 / NCTC 11488 / FDC 602W) (Vibrio succinogenes), this protein is Valine--tRNA ligase.